A 247-amino-acid polypeptide reads, in one-letter code: Transcription factor otaR1 (247 aa).

2 disordered regions span residues 1 to 48 (MEPA…ETSM) and 100 to 143 (DNAS…PLGN). Over residues 23–47 (DESSSTGLSLGSLLSSSNDLSSETS) the composition is skewed to low complexity. Over residues 134-143 (ANPTSVPLGN) the composition is skewed to polar residues. The tract at residues 156–196 (KKYHEKYKERNRVAAGKSRQKQVDLIELLQAEQREEERRRK) is basic motif. The region spanning 156–219 (KKYHEKYKER…LDLKQELQHH (64 aa)) is the bZIP domain. The leucine-zipper stretch occupies residues 198-212 (LERELSQIHKELLDL).

The protein resides in the nucleus. Its function is as follows. Transcription factor; part of the gene cluster that mediates the biosynthesis of ochratoxin A (OTA), a mycotoxin demonstrated to have nephrotoxic, immunotoxic, genotoxic, neurotoxic, and teratogenic properties. Positively regulates the expression of the cluster genes otaA, otaB, otaC and otaD, and the subsequent production of OTA. This Aspergillus carbonarius (strain ITEM 5010) protein is Transcription factor otaR1.